We begin with the raw amino-acid sequence, 166 residues long: Zinc finger CCHC domain-containing protein 13 (166 aa).

A CCHC-type 1; degenerate zinc finger spans residues 4–21 (KDFFACGHSGHWARGCPR). The CCHC-type 2; degenerate zinc finger occupies 45 to 62 (YTCYCCGESGRNAKNCVL). 4 consecutive CCHC-type zinc fingers follow at residues 65–82 (NICY…DCKD), 89–106 (QHCY…DCDR), 110–127 (QKCY…DCAQ), and 128–145 (VKCY…NCSK).

The protein is Zinc finger CCHC domain-containing protein 13 (ZCCHC13) of Homo sapiens (Human).